A 1096-amino-acid chain; its full sequence is MATVPVYCVCRLPYDVTRFMIECDACKDWFHGSCVGVEEEEAPDIDIYHCPNCEKTHGKSTLKKKRTWHKHGPGPTPDVKPVQNGSQLFIKELRSRTFPSAEDVVSRVPGSQLTVGYMEEHGFTEPILVPKKDGLGLAVPAPTFYVSDVENYVGPERSVDVTDVTKQKDCKMKLKEFVDYYYSTNRKRVLNVTNLEFSDTRMSSFVEPPDIVKKLSWVENYWPDDALLAKPKVTKYCLICVKDSYTDFHIDSGGASAWYHVLKGEKIFYLIRPASANISLYERWRSASNHSEMFFADQVDRCYKCTVKQGQTLFIPSGWIYATLTPVDCLAFAGHFLHSLSVEMQMRAYEVERRLKLGSLTQFPNFETACWYMGKHLLEAFKGSHKSGKQLPPHLVQGAKILNGAFRSWTKKQALAEHEDELPEHFRPSQLIKDLAKEIRLSENASKTVRPEVNAAASSDEVCDGDREKEEPPSPVETTPPRSLLEKVSKKKTSKTVKMPKPSKIPKPPKSPKPPKTLKLKDGSKKKGKKCKESASPTIPNLDLLEAHTKEALTKMEPPKKGKTPKSVLSVPNKDTVHTQNDMERLEIREQTKSKSEAKWKYKNSKPDSLLKMEEEQRLEKSPLAGNKDKFSFSFSNRKLLGSKALRPPSSPGVFGALQSFKEDKAKPVRDEYEYVSDDGELKIDEFPIRRKKSAPKRDLSFLLDKKEALLMPTSKPKLDSAVYKSDDSSDEGSLHIDTDTKPGRNAKVKKESGSSAAGILDLLQASEEVGALEYNPNSQPPASPSTQEAIQGMLSMANLQASDSCLQTTWGTGQAKGGSLAAHGARKIGGGNKGTGKRLLKRTAKNSVDLEDYEEQDHLDACFKDSDYVYPSLESDEDNPVFKSRSKKRKGSDDAPYSPTARVGPSVPRQDRPVREGTRVASIETGLAAAAAKLSQQEEQKNRKKKNTKRKPAPNTASPSISTSASASTGTTSASTTPASTTPASTTPASTTPASTSTASSQASQEGSSPEPPPESHSSSLADHEYTAAGTFSGSQAGRASQPMAPGVFLTQRRPSASSPNNTAAKGKRTKKGMATAKQRLGKILKIHRNGKLLL.

A PHD-type zinc finger spans residues 5–56 (PVYCVCRLPYDVTRFMIECDACKDWFHGSCVGVEEEEAPDIDIYHCPNCEKT). Positions 193 and 246 each coordinate 2-oxoglutarate. The JmjC domain maps to 197 to 353 (FSDTRMSSFV…MQMRAYEVER (157 aa)). Fe cation-binding residues include H249 and D251. Positions 259 and 266 each coordinate 2-oxoglutarate. Y321 contributes to the Fe cation binding site. T323 serves as a coordination point for 2-oxoglutarate. The interval 448–630 (TVRPEVNAAA…KSPLAGNKDK (183 aa)) is disordered. Phosphoserine is present on S474. T479 carries the phosphothreonine modification. The segment covering 503-515 (SKIPKPPKSPKPP) has biased composition (pro residues). Position 536 is a phosphoserine (S536). Composition is skewed to basic and acidic residues over residues 545 to 560 (LEAH…EPPK) and 575 to 630 (DTVH…NKDK). 3 positions are modified to phosphoserine: S651, S677, and S701. K707 participates in a covalent cross-link: Glycyl lysine isopeptide (Lys-Gly) (interchain with G-Cter in SUMO2). Residue K716 is modified to N6-acetyllysine. Disordered stretches follow at residues 719-755 (LDSA…ESGS), 811-841 (WGTG…KRLL), and 871-1080 (YPSL…TAKQ). A Phosphotyrosine modification is found at Y724. The segment covering 725–753 (KSDDSSDEGSLHIDTDTKPGRNAKVKKES) has biased composition (basic and acidic residues). 4 positions are modified to phosphoserine: S726, S729, S730, and S734. S873, S876, and S893 each carry phosphoserine. The segment covering 910–919 (RQDRPVREGT) has biased composition (basic and acidic residues). Positions 943-953 (NRKKKNTKRKP) are enriched in basic residues. Low complexity predominate over residues 954 to 1010 (APNTASPSISTSASASTGTTSASTTPASTTPASTTPASTTPASTSTASSQASQEGSS). Composition is skewed to polar residues over residues 1031–1040 (GTFSGSQAGR) and 1054–1065 (RRPSASSPNNTA). S1057 carries the phosphoserine; by PKA modification.

Belongs to the JHDM1 histone demethylase family. JHDM1D subfamily. In terms of assembly, component of the PHF2-ARID5B complex, at least composed of PHF2 and ARID5B. Interacts with HNF4A and NR1H4. Interacts with RELA. Phosphorylated by PKA on specific serine residues, leading to the formation of an active lysine demethylase complex.

Its subcellular location is the nucleus. It localises to the nucleolus. The protein localises to the chromosome. It is found in the centromere. The protein resides in the kinetochore. The enzyme catalyses N(6),N(6)-dimethyl-L-lysyl(9)-[histone H3] + 2-oxoglutarate + O2 = N(6)-methyl-L-lysyl(9)-[histone H3] + formaldehyde + succinate + CO2. Its activity is regulated as follows. Enzymatically inactive by itself, and become active following phosphorylation by PKA. In terms of biological role, lysine demethylase that demethylates both histones and non-histone proteins. Enzymatically inactive by itself, and becomes active following phosphorylation by PKA: forms a complex with ARID5B and mediates demethylation of methylated ARID5B. Demethylation of ARID5B leads to target the PHF2-ARID5B complex to target promoters, where PHF2 mediates demethylation of dimethylated 'Lys-9' of histone H3 (H3K9me2), followed by transcription activation of target genes. The PHF2-ARID5B complex acts as a coactivator of HNF4A in liver. PHF2 is recruited to trimethylated 'Lys-4' of histone H3 (H3K4me3) at rDNA promoters and promotes expression of rDNA. Involved in the activation of toll-like receptor 4 (TLR4)-target inflammatory genes in macrophages by catalyzing the demethylation of trimethylated histone H4 lysine 20 (H4K20me3) at the gene promoters. The sequence is that of Lysine-specific demethylase PHF2 (Phf2) from Mus musculus (Mouse).